Consider the following 410-residue polypeptide: Argininosuccinate synthase (410 aa).

6–14 (AYSGGLDTS) contributes to the ATP binding site. Tyr84 provides a ligand contact to L-citrulline. An ATP-binding site is contributed by Gly114. L-aspartate is bound by residues Thr116, Asn120, and Asp121. Asn120 is a binding site for L-citrulline. Positions 124, 169, 178, 254, and 266 each coordinate L-citrulline.

Belongs to the argininosuccinate synthase family. Type 1 subfamily. In terms of assembly, homotetramer.

Its subcellular location is the cytoplasm. The enzyme catalyses L-citrulline + L-aspartate + ATP = 2-(N(omega)-L-arginino)succinate + AMP + diphosphate + H(+). The protein operates within amino-acid biosynthesis; L-arginine biosynthesis; L-arginine from L-ornithine and carbamoyl phosphate: step 2/3. The protein is Argininosuccinate synthase of Pyrococcus furiosus (strain ATCC 43587 / DSM 3638 / JCM 8422 / Vc1).